We begin with the raw amino-acid sequence, 267 residues long: Diphthine--ammonia ligase (267 aa).

Position 97 is a phosphotyrosine (Tyr-97).

The protein belongs to the Diphthine--ammonia ligase family.

The catalysed reaction is diphthine-[translation elongation factor 2] + NH4(+) + ATP = diphthamide-[translation elongation factor 2] + AMP + diphosphate + H(+). Its pathway is protein modification; peptidyl-diphthamide biosynthesis. Its function is as follows. Amidase that catalyzes the last step of diphthamide biosynthesis using ammonium and ATP. Diphthamide biosynthesis consists in the conversion of an L-histidine residue in the translation elongation factor eEF-2 (EEF2) to diphthamide. The sequence is that of Diphthine--ammonia ligase (Dph6) from Rattus norvegicus (Rat).